Here is a 99-residue protein sequence, read N- to C-terminus: DNA-binding protein HmvA (99 aa).

Positions Lys-52–Lys-55 are interaction with DNA.

Belongs to the archaeal histone HMF family. In terms of assembly, homodimer or heterodimer with another histone. Dimers then assemble into higher oligomers, with the DNA wrapped around the protein core.

The protein localises to the cytoplasm. The protein resides in the chromosome. Its function is as follows. Binds and compact DNA (95 to 150 base pairs) to form nucleosome-like structures that contain positive DNA supercoils. Increases the resistance of DNA to thermal denaturation (in vitro). This Methanococcus voltae protein is DNA-binding protein HmvA (hmvA).